Here is a 517-residue protein sequence, read N- to C-terminus: Forkhead box protein N4 (517 aa).

Positions 193-289 form a DNA-binding region, fork-head; sequence KPIYSYSCLI…EEMHKWKRKD (97 aa). Disordered regions lie at residues 365-398 and 497-517; these read VQPQAHLAPDSPAPAQTPPLHALPDLSPSPLPHP and SGTSSSSQYLGAQGNKPIALL.

It localises to the nucleus. In terms of biological role, transcription factor essential for neural and some non-neural tissues development, such as retina and lung respectively. Binds to an 11-bp consensus sequence containing the invariant tetranucleotide 5'-ACGC-3'. During development of the central nervous system, is required to specify the amacrine and horizontal cell fates from multipotent retinal progenitors while suppressing the alternative photoreceptor cell fates through activating DLL4-NOTCH signaling. Also acts synergistically with ASCL1/MASH1 to activate DLL4-NOTCH signaling and drive commitment of p2 progenitors to the V2b interneuron fates during spinal cord neurogenesis. In development of non-neural tissues, plays an essential role in the specification of the atrioventricular canal and is indirectly required for patterning the distal airway during lung development. In Homo sapiens (Human), this protein is Forkhead box protein N4 (FOXN4).